Here is a 1770-residue protein sequence, read N- to C-terminus: Transposon Ty2-F Gag-Pol polyprotein (1770 aa).

3 stretches are compositionally biased toward polar residues: residues 1–11 (MESQQLHQNPH), 19–39 (ASVTSKEVPSNQDPLAVSASN), and 49–60 (KVNSQQETTPGT). Disordered regions lie at residues 1–86 (MESQ…GQYQ) and 359–453 (QHSE…LPDH). The interval 295 to 397 (ENNINVSDRL…SSKPRAAKAH (103 aa)) is RNA-binding. Residues 369–381 (TSPNTTNTKVTTR) show a composition bias toward low complexity. 2 stretches are compositionally biased toward polar residues: residues 399-408 (IATSSKFSRV) and 415-435 (ESTVSSQYLSDDNELSLGQQQ). Catalysis depends on Asp457, which acts as the For protease activity; shared with dimeric partner. Positions 579–636 (NVNKSKSVNKYPYPLIHRMLGHANFRSIQKSLKKNAVTYLKESDIEWSNASTYQCPDC) are integrase-type zinc finger-like. One can recognise an Integrase catalytic domain in the interval 656 to 831 (ESYEPFQYLH…AGLDITTILP (176 aa)). Mg(2+) contacts are provided by Asp667 and Asp732. Disordered stretches follow at residues 1004 to 1034 (MGGTVESDTTSPRHSSTFTARNQNRPGSTNE), 1059 to 1135 (TEEP…KSSK), 1146 to 1165 (LPLPDLTHKSPTDTSDVSKD), and 1170 to 1205 (HSRQTNSSLGGMDDSNVLTTTKSKKRSLEDNETEIE). 2 stretches are compositionally biased toward polar residues: residues 1009 to 1034 (ESDTTSPRHSSTFTARNQNRPGSTNE) and 1065 to 1082 (QRNSDTNIKYRTTNSTPS). Basic and acidic residues predominate over residues 1151-1165 (LTHKSPTDTSDVSKD). A Bipartite nuclear localization signal motif is present at residues 1193–1227 (KKRSLEDNETEIEVSRDTWNNKNMRSLEPPRSKKR). Residues 1353–1491 (NDYYITQLDI…DILGLEIKYQ (139 aa)) form the Reverse transcriptase Ty1/copia-type domain. Residues Asp1361, Asp1442, Asp1443, Asp1625, Glu1667, and Asp1700 each coordinate Mg(2+). The 143-residue stretch at 1625–1767 (DASYGNQPYY…IKTFKLLTNK (143 aa)) folds into the RNase H Ty1/copia-type domain.

The capsid protein forms a homotrimer, from which the VLPs are assembled. The protease is a homodimer, whose active site consists of two apposed aspartic acid residues. Initially, virus-like particles (VLPs) are composed of the structural unprocessed proteins Gag and Gag-Pol, and also contain the host initiator methionine tRNA (tRNA(i)-Met) which serves as a primer for minus-strand DNA synthesis, and a dimer of genomic Ty RNA. Processing of the polyproteins occurs within the particle and proceeds by an ordered pathway, called maturation. First, the protease (PR) is released by autocatalytic cleavage of the Gag-Pol polyprotein, and this cleavage is a prerequisite for subsequent processing at the remaining sites to release the mature structural and catalytic proteins. Maturation takes place prior to the RT reaction and is required to produce transposition-competent VLPs.

The protein localises to the cytoplasm. It localises to the nucleus. The catalysed reaction is DNA(n) + a 2'-deoxyribonucleoside 5'-triphosphate = DNA(n+1) + diphosphate. It carries out the reaction Endonucleolytic cleavage to 5'-phosphomonoester.. Capsid protein (CA) is the structural component of the virus-like particle (VLP), forming the shell that encapsulates the retrotransposons dimeric RNA genome. The particles are assembled from trimer-clustered units and there are holes in the capsid shells that allow for the diffusion of macromolecules. CA also has nucleocapsid-like chaperone activity, promoting primer tRNA(i)-Met annealing to the multipartite primer-binding site (PBS), dimerization of Ty2 RNA and initiation of reverse transcription. Functionally, the aspartyl protease (PR) mediates the proteolytic cleavages of the Gag and Gag-Pol polyproteins after assembly of the VLP. Its function is as follows. Reverse transcriptase/ribonuclease H (RT) is a multifunctional enzyme that catalyzes the conversion of the retro-elements RNA genome into dsDNA within the VLP. The enzyme displays a DNA polymerase activity that can copy either DNA or RNA templates, and a ribonuclease H (RNase H) activity that cleaves the RNA strand of RNA-DNA heteroduplexes during plus-strand synthesis and hydrolyzes RNA primers. The conversion leads to a linear dsDNA copy of the retrotransposon that includes long terminal repeats (LTRs) at both ends. In terms of biological role, integrase (IN) targets the VLP to the nucleus, where a subparticle preintegration complex (PIC) containing at least integrase and the newly synthesized dsDNA copy of the retrotransposon must transit the nuclear membrane. Once in the nucleus, integrase performs the integration of the dsDNA into the host genome. The protein is Transposon Ty2-F Gag-Pol polyprotein (TY2B-F) of Saccharomyces cerevisiae (strain ATCC 204508 / S288c) (Baker's yeast).